A 334-amino-acid polypeptide reads, in one-letter code: MDKRMVDQEFHNEDTDLELSLRPTQLKQYIGQSSIKSNLEVFIKAAKLRQEPLDHVLLFGPPGLGKTTLSNIIANEMEVNIRTISGPSLERPGDLAAILSGLQPGDVLFIDEIHRLSSVVEEVLYPAMEDFFLDIIIGKGDEARSIRIDLPPFTLVGATTRAGSLTGPLRDRFGVHLRLEYYNENDLKEIITRTAEVLGTDIDKESALELARRSRGTPRIANRLLKRVRDFQQVNEDDQIYIETTKRALQLLQVDQHGLDYIDHKMMNCIINQYNGGPVGLDTIAVSIGEERVTIEDVYEPFLIQRGFLERTPRGRKATALAYEHFNTTNEKRE.

Residues 1 to 182 (MDKRMVDQEF…FGVHLRLEYY (182 aa)) form a large ATPase domain (RuvB-L) region. ATP is bound by residues Leu-21, Arg-22, Gly-63, Lys-66, Thr-67, Thr-68, 129 to 131 (EDF), Arg-172, Tyr-182, and Arg-219. Residue Thr-67 coordinates Mg(2+). The tract at residues 183 to 253 (NENDLKEIIT…TTKRALQLLQ (71 aa)) is small ATPAse domain (RuvB-S). Residues 256 to 334 (QHGLDYIDHK…HFNTTNEKRE (79 aa)) are head domain (RuvB-H). 3 residues coordinate DNA: Arg-292, Arg-311, and Arg-316.

The protein belongs to the RuvB family. As to quaternary structure, homohexamer. Forms an RuvA(8)-RuvB(12)-Holliday junction (HJ) complex. HJ DNA is sandwiched between 2 RuvA tetramers; dsDNA enters through RuvA and exits via RuvB. An RuvB hexamer assembles on each DNA strand where it exits the tetramer. Each RuvB hexamer is contacted by two RuvA subunits (via domain III) on 2 adjacent RuvB subunits; this complex drives branch migration. In the full resolvosome a probable DNA-RuvA(4)-RuvB(12)-RuvC(2) complex forms which resolves the HJ.

It is found in the cytoplasm. The enzyme catalyses ATP + H2O = ADP + phosphate + H(+). The RuvA-RuvB-RuvC complex processes Holliday junction (HJ) DNA during genetic recombination and DNA repair, while the RuvA-RuvB complex plays an important role in the rescue of blocked DNA replication forks via replication fork reversal (RFR). RuvA specifically binds to HJ cruciform DNA, conferring on it an open structure. The RuvB hexamer acts as an ATP-dependent pump, pulling dsDNA into and through the RuvAB complex. RuvB forms 2 homohexamers on either side of HJ DNA bound by 1 or 2 RuvA tetramers; 4 subunits per hexamer contact DNA at a time. Coordinated motions by a converter formed by DNA-disengaged RuvB subunits stimulates ATP hydrolysis and nucleotide exchange. Immobilization of the converter enables RuvB to convert the ATP-contained energy into a lever motion, pulling 2 nucleotides of DNA out of the RuvA tetramer per ATP hydrolyzed, thus driving DNA branch migration. The RuvB motors rotate together with the DNA substrate, which together with the progressing nucleotide cycle form the mechanistic basis for DNA recombination by continuous HJ branch migration. Branch migration allows RuvC to scan DNA until it finds its consensus sequence, where it cleaves and resolves cruciform DNA. The sequence is that of Holliday junction branch migration complex subunit RuvB from Staphylococcus epidermidis (strain ATCC 35984 / DSM 28319 / BCRC 17069 / CCUG 31568 / BM 3577 / RP62A).